The following is an 874-amino-acid chain: Protein translocase subunit SecA (874 aa).

ATP-binding positions include Q87, 105–109, and D512; that span reads GEGKT. C859, C861, C870, and H871 together coordinate Zn(2+).

This sequence belongs to the SecA family. In terms of assembly, monomer and homodimer. Part of the essential Sec protein translocation apparatus which comprises SecA, SecYEG and auxiliary proteins SecDF-YajC and YidC. Zn(2+) serves as cofactor.

The protein resides in the cell inner membrane. It is found in the cytoplasm. It catalyses the reaction ATP + H2O + cellular proteinSide 1 = ADP + phosphate + cellular proteinSide 2.. Functionally, part of the Sec protein translocase complex. Interacts with the SecYEG preprotein conducting channel. Has a central role in coupling the hydrolysis of ATP to the transfer of proteins into and across the cell membrane, serving both as a receptor for the preprotein-SecB complex and as an ATP-driven molecular motor driving the stepwise translocation of polypeptide chains across the membrane. The protein is Protein translocase subunit SecA of Buchnera aphidicola subsp. Schizaphis graminum (strain Sg).